The primary structure comprises 217 residues: Ranaspumin (217 aa).

Intrachain disulfides connect Cys-18-Cys-67, Cys-38-Cys-114, Cys-125-Cys-168, and Cys-146-Cys-207.

Monomer. Exclusively expressed in females in the early oviduct, the glandular part of the oviduct (pars convoluta dilata) and in the cloaca.

The protein resides in the secreted. Its function is as follows. Acts as a surfactant. Is the major protein constituent (45%) of foam nests. Has no antimicrobial activity, no larvicidal activity, and is not toxic to mice. This chain is Ranaspumin, found in Leptodactylus vastus (Northeastern pepper frog).